The chain runs to 126 residues: Glycine cleavage system H protein (126 aa).

Positions 22–104 constitute a Lipoyl-binding domain; sequence IAYVGITDYA…YGKGWLIKIK (83 aa). Lys-63 bears the N6-lipoyllysine mark.

It belongs to the GcvH family. In terms of assembly, the glycine cleavage system is composed of four proteins: P, T, L and H. (R)-lipoate serves as cofactor.

Functionally, the glycine cleavage system catalyzes the degradation of glycine. The H protein shuttles the methylamine group of glycine from the P protein to the T protein. The polypeptide is Glycine cleavage system H protein (Phocaeicola vulgatus (strain ATCC 8482 / DSM 1447 / JCM 5826 / CCUG 4940 / NBRC 14291 / NCTC 11154) (Bacteroides vulgatus)).